The chain runs to 464 residues: ATP synthase subunit beta (464 aa).

152 to 159 serves as a coordination point for ATP; the sequence is GGAGVGKS.

The protein belongs to the ATPase alpha/beta chains family. As to quaternary structure, F-type ATPases have 2 components, CF(1) - the catalytic core - and CF(0) - the membrane proton channel. CF(1) has five subunits: alpha(3), beta(3), gamma(1), delta(1), epsilon(1). CF(0) has three main subunits: a(1), b(2) and c(9-12). The alpha and beta chains form an alternating ring which encloses part of the gamma chain. CF(1) is attached to CF(0) by a central stalk formed by the gamma and epsilon chains, while a peripheral stalk is formed by the delta and b chains.

Its subcellular location is the cell membrane. It carries out the reaction ATP + H2O + 4 H(+)(in) = ADP + phosphate + 5 H(+)(out). In terms of biological role, produces ATP from ADP in the presence of a proton gradient across the membrane. The catalytic sites are hosted primarily by the beta subunits. This is ATP synthase subunit beta from Protochlamydia amoebophila (strain UWE25).